Reading from the N-terminus, the 418-residue chain is Probable serine/threonine-protein kinase nek2 (418 aa).

The region spanning 4 to 264 (YEILGALGKG…VNELLGYSFI (261 aa)) is the Protein kinase domain. Residues 10–18 (LGKGSFGVV) and lysine 33 each bind ATP. The Proton acceptor role is filled by aspartate 135. The stretch at 278–363 (QGLKQMDEDL…SNLSLNCNNS (86 aa)) forms a coiled coil.

The protein belongs to the protein kinase superfamily. NEK Ser/Thr protein kinase family. NIMA subfamily.

It catalyses the reaction L-seryl-[protein] + ATP = O-phospho-L-seryl-[protein] + ADP + H(+). The catalysed reaction is L-threonyl-[protein] + ATP = O-phospho-L-threonyl-[protein] + ADP + H(+). Involved in centrosome biogenesis. Seems to be required for recruitment of centrosomal material and might be involved in de novo centrosome formation. This Dictyostelium discoideum (Social amoeba) protein is Probable serine/threonine-protein kinase nek2 (nek2).